Here is a 43-residue protein sequence, read N- to C-terminus: Protein PsbN (43 aa).

The helical transmembrane segment at 5–25 threads the bilayer; sequence LILSIFIFSLLLGITSYSIYI.

It belongs to the PsbN family.

Its subcellular location is the plastid. It is found in the chloroplast thylakoid membrane. Its function is as follows. May play a role in photosystem I and II biogenesis. In Cyanidium caldarium (Red alga), this protein is Protein PsbN.